We begin with the raw amino-acid sequence, 1071 residues long: Exportin-1 (1071 aa).

The tract at residues 1–679 is necessary for HTLV-1 Rex-mediated mRNA export; the sequence is MPAIMTMLAD…QQATKNVDIL (679 aa). The Importin N-terminal domain maps to 46–112; sequence AQEVLTHLKE…KKYVVGLIIK (67 aa). HEAT repeat units follow at residues 217–240, 241–277, 354–472, 515–553, 560–597, and 602–639; these read QNAP…PLGY, IFET…VSVS, MLLV…YVDT, RFLV…QYPR, KFLK…KCRR, and VQVG…AVGY. The interval 327–450 is interaction with Ran and nuclear export complex formation; sequence CTFLKEHDQL…VREFMKDTDS (124 aa). At Ser391 the chain carries Phosphoserine. The necessary for HTLV-1 Rex multimerization stretch occupies residues 411–414; it reads PMLF. The tract at residues 411 to 481 is interaction with RANBP3; sequence PMLFKVRLLM…TERIMTEKLH (71 aa). An N6-acetyllysine modification is found at Lys446. Thr448 is subject to Phosphothreonine. Ser450 is modified (phosphoserine). Tyr454 is modified (phosphotyrosine). Lys693 carries the N6-acetyllysine modification. 4 HEAT repeats span residues 775-813, 885-916, 917-954, and 1002-1039; these read NFVP…KLGG, TMRN…SFYQ, TYFC…NLVE, and FSLN…EERE. The interaction with HIV-1 Rev stretch occupies residues 800 to 820; sequence VLSTMAIIVNKLGGHITAEIP. Ser1031 bears the Phosphoserine mark.

It belongs to the exportin family. Found in a U snRNA export complex with PHAX/RNUXA, NCBP1/CBP80, NCBP2/CBP20, RAN, XPO1 and m7G-capped RNA. Component of a nuclear export receptor complex composed of KPNB1, RAN, SNUPN and XPO1. Found in a trimeric export complex with SNUPN, RAN and XPO1. Found in a nuclear export complex with RANBP3 and RAN. Found in a 60S ribosomal subunit export complex with NMD3, RAN, XPO1. Interacts with DDX3X, NMD3, NUP42, NUP88, NUP214, RANBP3 and TERT. Interacts with NEMF (via its N-terminus). Interacts with the monomeric form of BIRC5/survivin deacetylated at 'Lys-129'. Interacts with DTNBP1 and SERTAD2; the interactions translocate DTNBP1 and SERTAD2 out of the nucleus. Interacts with ATF2. Interacts with SLC35G1 and STIM1. Interacts with DCAF8. Interacts with CPEB3. Interacts with HAX1. Interacts with BOK; translocates to the cytoplasm. Interacts with HSP90AB1. Interacts with LRPPRC; interacts with LRPPRC alone and also when LRPPRC is in complex with EIF4E and with EIF4E sensitivity element (4ESE)-containing mRNAs to form an EIF4E-dependent mRNA export complex. As to quaternary structure, (Microbial infection) Interacts with HIV-1 Rev. In terms of assembly, (Microbial infection) Interacts with HTLV-1 Rex. (Microbial infection) Interacts with influenza A nucleoprotein. As to quaternary structure, (Microbial infection) Interacts with Epstein-Barr virus protein BMLF1. In terms of assembly, (Microbial infection) Part of a tetrameric complex composed of CRM1, importin alpha/beta dimer and the Venezuelan equine encephalitis virus (VEEV) capsid; this complex blocks the receptor-mediated transport through the nuclear pore. (Microbial infection) Interacts with SARS-CoV virus protein ORF9b; this interaction mediates protein ORF9b export out of the nucleus. Expressed in heart, brain, placenta, lung, liver, skeletal muscle, pancreas, spleen, thymus, prostate, testis, ovary, small intestine, colon and peripheral blood leukocytes. Not expressed in the kidney.

The protein localises to the cytoplasm. The protein resides in the nucleus. It localises to the nucleoplasm. It is found in the cajal body. Its subcellular location is the nucleolus. Its function is as follows. Mediates the nuclear export of cellular proteins (cargos) bearing a leucine-rich nuclear export signal (NES) and of RNAs. In the nucleus, in association with RANBP3, binds cooperatively to the NES on its target protein and to the GTPase RAN in its active GTP-bound form (Ran-GTP). Docking of this complex to the nuclear pore complex (NPC) is mediated through binding to nucleoporins. Upon transit of a nuclear export complex into the cytoplasm, disassembling of the complex and hydrolysis of Ran-GTP to Ran-GDP (induced by RANBP1 and RANGAP1, respectively) cause release of the cargo from the export receptor. The directionality of nuclear export is thought to be conferred by an asymmetric distribution of the GTP- and GDP-bound forms of Ran between the cytoplasm and nucleus. Involved in U3 snoRNA transport from Cajal bodies to nucleoli. Binds to late precursor U3 snoRNA bearing a TMG cap. In terms of biological role, (Microbial infection) Mediates the export of unspliced or incompletely spliced RNAs out of the nucleus from different viruses including HIV-1, HTLV-1 and influenza A. Interacts with, and mediates the nuclear export of HIV-1 Rev and HTLV-1 Rex proteins. Involved in HTLV-1 Rex multimerization. This chain is Exportin-1 (XPO1), found in Homo sapiens (Human).